The chain runs to 522 residues: Putative ribose/galactose/methyl galactoside import ATP-binding protein (522 aa).

ABC transporter domains are found at residues 7 to 244 (LEMV…VGRE) and 254 to 498 (PKLG…TGQA). 39 to 46 (GENGAGKS) lines the ATP pocket.

Belongs to the ABC transporter superfamily. Carbohydrate importer 2 (CUT2) (TC 3.A.1.2) family.

The protein localises to the cell membrane. It carries out the reaction D-ribose(out) + ATP + H2O = D-ribose(in) + ADP + phosphate + H(+). It catalyses the reaction D-galactose(out) + ATP + H2O = D-galactose(in) + ADP + phosphate + H(+). Part of an ABC transporter complex involved in carbohydrate import. Could be involved in ribose, galactose and/or methyl galactoside import. Responsible for energy coupling to the transport system. This Halalkalibacterium halodurans (strain ATCC BAA-125 / DSM 18197 / FERM 7344 / JCM 9153 / C-125) (Bacillus halodurans) protein is Putative ribose/galactose/methyl galactoside import ATP-binding protein.